The primary structure comprises 188 residues: Phosphoribosylglycinamide formyltransferase (188 aa).

12 to 14 serves as a coordination point for N(1)-(5-phospho-beta-D-ribosyl)glycinamide; sequence GSN. (6R)-10-formyltetrahydrofolate-binding positions include K66, 91 to 94, and N108; that span reads MRLV. The active-site Proton donor is the H110.

Belongs to the GART family.

It carries out the reaction N(1)-(5-phospho-beta-D-ribosyl)glycinamide + (6R)-10-formyltetrahydrofolate = N(2)-formyl-N(1)-(5-phospho-beta-D-ribosyl)glycinamide + (6S)-5,6,7,8-tetrahydrofolate + H(+). It functions in the pathway purine metabolism; IMP biosynthesis via de novo pathway; N(2)-formyl-N(1)-(5-phospho-D-ribosyl)glycinamide from N(1)-(5-phospho-D-ribosyl)glycinamide (10-formyl THF route): step 1/1. Functionally, catalyzes the transfer of a formyl group from 10-formyltetrahydrofolate to 5-phospho-ribosyl-glycinamide (GAR), producing 5-phospho-ribosyl-N-formylglycinamide (FGAR) and tetrahydrofolate. The chain is Phosphoribosylglycinamide formyltransferase from Staphylococcus epidermidis (strain ATCC 35984 / DSM 28319 / BCRC 17069 / CCUG 31568 / BM 3577 / RP62A).